A 631-amino-acid polypeptide reads, in one-letter code: MARAVGIDLGTTNSCIATLEGGEPTVIVNAEGARTTPSVVAFSKSGEILVGEVAKRQAVTNVDRTISSVKRHMGTDWTVDIDGKKWTPQEISAQILMKLKRDAEAYLGEPVTDAVITCPAYFNDAQRQATKDAGKIAGLNVLRIINEPTAAALAYGLEKGKEDERILVFDLGGGTFDVSLLEIGKDDDGFSTIQVQATNGDNHLGGDDWDQKIIDWLVSEVKNKYGVDLSKDKIALQRLKEAAEQAKKELSSSTSTSISMQYLAMTPDGTPVHLDETLTRAHFEEMTSDLLGRCRTPFNNVLHDAGISVSDIDHVVLVGGSTRMPAVKDLVKELTGGKEANQSVNPDEVVAVGAAVQSGVIKGDRKDVLLIDVTPLSLGIETKGGIMTKLIDRNTAIPTKRSEVFSTAEDNQPSVLIQVYQGEREFARDNKPLGTFELTGIAPAPRGVPQIEVTFDIDANGIVHVSAKDKGTGKEQSMTITGGSGLPKDEIDRMVKEAEAHEAEDKQRKEDAETRNQAEAFAYSTEKLVNDNKDKLSDDIVKEVTDKVNALKEALKGDDTEKVKTAQTELMTAAQKIGQVLYAQQGAEGAAAGAGAAGAAGAGASAGSASGSDDDTVEAEVVDDDDDKDNK.

T175 bears the Phosphothreonine; by autocatalysis mark. A disordered region spans residues 586–631 (GAEGAAAGAGAAGAAGAGASAGSASGSDDDTVEAEVVDDDDDKDNK). Residues 602-611 (AGASAGSASG) are compositionally biased toward low complexity. A compositionally biased stretch (acidic residues) spans 612 to 631 (SDDDTVEAEVVDDDDDKDNK).

Belongs to the heat shock protein 70 family.

Functionally, acts as a chaperone. The sequence is that of Chaperone protein DnaK from Bifidobacterium longum subsp. infantis (strain ATCC 15697 / DSM 20088 / JCM 1222 / NCTC 11817 / S12).